The following is a 154-amino-acid chain: Ribosome maturation factor RimP (154 aa).

The protein belongs to the RimP family.

It localises to the cytoplasm. Functionally, required for maturation of 30S ribosomal subunits. The sequence is that of Ribosome maturation factor RimP from Cyanothece sp. (strain PCC 7425 / ATCC 29141).